Consider the following 620-residue polypeptide: Ran-binding protein 10 (620 aa).

The disordered stretch occupies residues 1–38; it reads MAAATADPGAGNPQAGDSSGGDSGGGLPSPGEQELSRR. A2 is modified (N-acetylalanine). The span at 18–28 shows a compositional bias: gly residues; the sequence is SSGGDSGGGLP. In terms of domain architecture, B30.2/SPRY spans 35–222; the sequence is LSRRLQRLYP…VDANFGQQPF (188 aa). The 33-residue stretch at 253 to 285 folds into the LisH domain; the sequence is WQAVLQNMVSSYLVHHGYCSTATAFARMTETPI. Residues 291–348 form the CTLH domain; that stretch reads SIKNRQKIQKLVLEGRVGEAIETTQRFYPGLLEHNPNLLFMLKCRQFVEMVNGTDSEV. Residues 347–398 are compositionally biased toward polar residues; it reads EVRSLSSRSPKSQDSYPGSPSLSPRHGPSSSHIHNTGADSPSCSNGVASTKN. A disordered region spans residues 347–460; it reads EVRSLSSRSP…SDSEMEMEAE (114 aa). S361 is modified (phosphoserine). Phosphotyrosine is present on Y362. S365, S367, S369, and S422 each carry phosphoserine. The segment covering 409-436 has biased composition (low complexity); that stretch reads SSSSSSSSSSSSSSPSSVNYSESNSTDS. Positions 437 to 450 are enriched in polar residues; sequence TKSQPHSSTSNQET. Phosphoserine occurs at positions 451 and 453.

This sequence belongs to the RANBP9/10 family. In terms of assembly, may form homodimers. Identified in the CTLH complex that contains GID4, RANBP9 and/or RANBP10, MKLN1, MAEA, RMND5A (or alternatively its paralog RMND5B), GID8, ARMC8, WDR26 and YPEL5. Within this complex, MAEA, RMND5A (or alternatively its paralog RMND5B), GID8, WDR26, and RANBP9 and/or RANBP10 form the catalytic core, while GID4, MKLN1, ARMC8 and YPEL5 have ancillary roles. Interacts with RAN and RANBP9. Interacts with the HGF receptor MET. Interacts with AR. Interacts with TUBB1. Interacts with YPEL5. May interact with TUBB5. Interacts with DDX4. As to expression, expressed at highest levels in spleen and liver. Expressed in megakaryocytes and platelets (at protein level).

The protein localises to the cytoplasm. It is found in the nucleus. In terms of biological role, may act as an adapter protein to couple membrane receptors to intracellular signaling pathways. Core component of the CTLH E3 ubiquitin-protein ligase complex that selectively accepts ubiquitin from UBE2H and mediates ubiquitination and subsequent proteasomal degradation of the transcription factor HBP1. Enhances dihydrotestosterone-induced transactivation activity of AR, as well as dexamethasone-induced transactivation activity of NR3C1, but does not affect estrogen-induced transactivation. Acts as a guanine nucleotide exchange factor (GEF) for RAN GTPase. May play an essential role in hemostasis and in maintaining microtubule dynamics with respect to both platelet shape and function. This chain is Ran-binding protein 10 (Ranbp10), found in Mus musculus (Mouse).